A 311-amino-acid polypeptide reads, in one-letter code: Glutaminase (311 aa).

Positions 66, 116, 162, 169, 193, 245, and 263 each coordinate substrate.

The protein belongs to the glutaminase family. As to quaternary structure, homotetramer.

The enzyme catalyses L-glutamine + H2O = L-glutamate + NH4(+). This chain is Glutaminase, found in Rhodopseudomonas palustris (strain HaA2).